Here is a 471-residue protein sequence, read N- to C-terminus: Eukaryotic translation initiation factor 3 subunit L (471 aa).

The PCI domain maps to 252–446 (DAIRMFSHIL…DLDYAMQGDL (195 aa)).

It belongs to the eIF-3 subunit L family.

Its subcellular location is the cytoplasm. Its function is as follows. Component of the eukaryotic translation initiation factor 3 (eIF-3) complex, which is involved in protein synthesis of a specialized repertoire of mRNAs and, together with other initiation factors, stimulates binding of mRNA and methionyl-tRNAi to the 40S ribosome. The eIF-3 complex specifically targets and initiates translation of a subset of mRNAs involved in cell proliferation. In Pyricularia oryzae (strain Y34) (Rice blast fungus), this protein is Eukaryotic translation initiation factor 3 subunit L.